A 223-amino-acid polypeptide reads, in one-letter code: Ribosomal RNA small subunit methyltransferase G (223 aa).

S-adenosyl-L-methionine contacts are provided by residues Gly-82, Leu-87, Ala-133 to Glu-134, and Arg-151.

Belongs to the methyltransferase superfamily. RNA methyltransferase RsmG family.

The protein resides in the cytoplasm. Specifically methylates the N7 position of guanine in position 518 of 16S rRNA. The polypeptide is Ribosomal RNA small subunit methyltransferase G (Corynebacterium glutamicum (strain R)).